The following is a 333-amino-acid chain: GTP 3',8-cyclase (333 aa).

The Radical SAM core domain maps to Lys7–Glu221. Arg16 lines the GTP pocket. Residues Cys23 and Cys27 each contribute to the [4Fe-4S] cluster site. An S-adenosyl-L-methionine-binding site is contributed by Tyr29. Cys30 provides a ligand contact to [4Fe-4S] cluster. Arg66 contacts GTP. Gly70 contributes to the S-adenosyl-L-methionine binding site. Thr97 provides a ligand contact to GTP. Ser121 lines the S-adenosyl-L-methionine pocket. Lys158 contacts GTP. S-adenosyl-L-methionine is bound at residue Met192. [4Fe-4S] cluster-binding residues include Cys257 and Cys260. Residue Arg262–Arg264 participates in GTP binding. Cys274 lines the [4Fe-4S] cluster pocket.

This sequence belongs to the radical SAM superfamily. MoaA family. Monomer and homodimer. [4Fe-4S] cluster serves as cofactor.

It carries out the reaction GTP + AH2 + S-adenosyl-L-methionine = (8S)-3',8-cyclo-7,8-dihydroguanosine 5'-triphosphate + 5'-deoxyadenosine + L-methionine + A + H(+). The protein operates within cofactor biosynthesis; molybdopterin biosynthesis. Functionally, catalyzes the cyclization of GTP to (8S)-3',8-cyclo-7,8-dihydroguanosine 5'-triphosphate. In Listeria welshimeri serovar 6b (strain ATCC 35897 / DSM 20650 / CCUG 15529 / CIP 8149 / NCTC 11857 / SLCC 5334 / V8), this protein is GTP 3',8-cyclase.